We begin with the raw amino-acid sequence, 427 residues long: Diaminobutyrate--2-oxoglutarate transaminase (427 aa).

Lys-264 carries the N6-(pyridoxal phosphate)lysine modification.

Belongs to the class-III pyridoxal-phosphate-dependent aminotransferase family. Requires pyridoxal 5'-phosphate as cofactor.

The enzyme catalyses L-2,4-diaminobutanoate + 2-oxoglutarate = L-aspartate 4-semialdehyde + L-glutamate. The protein operates within amine and polyamine biosynthesis; ectoine biosynthesis; L-ectoine from L-aspartate 4-semialdehyde: step 1/3. Functionally, catalyzes reversively the conversion of L-aspartate beta-semialdehyde (ASA) to L-2,4-diaminobutyrate (DABA) by transamination with L-glutamate. The sequence is that of Diaminobutyrate--2-oxoglutarate transaminase (ectB) from Wolinella succinogenes (strain ATCC 29543 / DSM 1740 / CCUG 13145 / JCM 31913 / LMG 7466 / NCTC 11488 / FDC 602W) (Vibrio succinogenes).